The primary structure comprises 491 residues: Serine/threonine-protein phosphatase 2A regulatory subunit B'' subunit delta (491 aa).

Positions 331–366 constitute an EF-hand domain; it reads TTPTSTEYWFRCMDLDGDGALSMFELEFFYEEQAQR. Positions 344, 346, 348, and 355 each coordinate Ca(2+). 2 stretches are compositionally biased toward acidic residues: residues 460–473 and 481–491; these read AMAE…EGSD and ADEDCDDLEPL. Positions 460–491 are disordered; that stretch reads AMAEDDDDHDEGSDPIDLYGLADEDCDDLEPL.

In terms of assembly, PP2A consists of a common heterodimeric core enzyme, composed of a 36 kDa catalytic subunit (subunit C) and a 65 kDa constant regulatory subunit (PR65 or subunit A), that associates with a variety of regulatory subunits. Proteins that associate with the core dimer include three families of regulatory subunits B (the R2/B/PR55/B55, R3/B''/PR72/PR130/PR59 and R5/B'/B56 families), the 48 kDa variable regulatory subunit, viral proteins, and cell signaling molecules. As to expression, expressed in testis, kidney, liver, lung, spleen, brain and heart.

Functionally, the B regulatory subunit might modulate substrate selectivity and catalytic activity, and might also direct the localization of the catalytic enzyme to a particular subcellular compartment. Interacts with retinoblastoma-related protein p107 (in vivo). May target PP2A core dimer to p107 resulting in dephosphorylation of p107. The sequence is that of Serine/threonine-protein phosphatase 2A regulatory subunit B'' subunit delta (Ppp2r3d) from Mus musculus (Mouse).